The sequence spans 104 residues: Integration host factor subunit alpha (104 aa).

It belongs to the bacterial histone-like protein family. Heterodimer of an alpha and a beta chain.

In terms of biological role, this protein is one of the two subunits of integration host factor, a specific DNA-binding protein that functions in genetic recombination as well as in transcriptional and translational control. The chain is Integration host factor subunit alpha from Buchnera aphidicola subsp. Cinara cedri (strain Cc).